Reading from the N-terminus, the 305-residue chain is Homoserine O-acetyltransferase (305 aa).

Catalysis depends on Cys-142, which acts as the Acyl-thioester intermediate. Lys-163 and Ser-192 together coordinate substrate. His-233 acts as the Proton acceptor in catalysis. Residue Glu-235 is part of the active site. A substrate-binding site is contributed by Arg-247.

This sequence belongs to the MetA family.

Its subcellular location is the cytoplasm. It carries out the reaction L-homoserine + acetyl-CoA = O-acetyl-L-homoserine + CoA. It participates in amino-acid biosynthesis; L-methionine biosynthesis via de novo pathway; O-acetyl-L-homoserine from L-homoserine: step 1/1. Its function is as follows. Transfers an acetyl group from acetyl-CoA to L-homoserine, forming acetyl-L-homoserine. The sequence is that of Homoserine O-acetyltransferase from Methanomassiliicoccus intestinalis (strain Issoire-Mx1).